A 139-amino-acid chain; its full sequence is Thioredoxin 2 (139 aa).

Residues Cys-5–Arg-18 fold into a zinc finger. A Thioredoxin domain is found at Gly-26–Leu-139. Cys-64 and Cys-67 are oxidised to a cystine.

It belongs to the thioredoxin family.

The protein localises to the cytoplasm. The enzyme catalyses [protein]-dithiol + NAD(+) = [protein]-disulfide + NADH + H(+). The catalysed reaction is [protein]-dithiol + NADP(+) = [protein]-disulfide + NADPH + H(+). Its function is as follows. Efficient electron donor for the essential enzyme ribonucleotide reductase. Is also able to reduce the interchain disulfide bridges of insulin. The protein is Thioredoxin 2 (trxC) of Escherichia coli O6:H1 (strain CFT073 / ATCC 700928 / UPEC).